The primary structure comprises 181 residues: MICGIDEVGRGCIFGPVLSAAVIFKSKPNFLNELDDSKKLTKTKREYLSALILENAYYAFADISNEIIDKINIHNASLLAMQIAYQKLNIECNLVLVDGKFIPKIQAKQIRAIIKGDSMIDEIKAASIIAKVQRDKLMVEYDKIYPLYGLKKNKGYPTKEHKDAIKKHGILSLHRKSFQLI.

The 181-residue stretch at 1–181 folds into the RNase H type-2 domain; that stretch reads MICGIDEVGR…SLHRKSFQLI (181 aa). D6, E7, and D98 together coordinate a divalent metal cation.

Belongs to the RNase HII family. Mn(2+) serves as cofactor. Requires Mg(2+) as cofactor.

It localises to the cytoplasm. The enzyme catalyses Endonucleolytic cleavage to 5'-phosphomonoester.. Functionally, endonuclease that specifically degrades the RNA of RNA-DNA hybrids. The polypeptide is Ribonuclease HII (Borrelia duttonii (strain Ly)).